A 355-amino-acid chain; its full sequence is Type II restriction enzyme CfrBI (355 aa).

It catalyses the reaction Endonucleolytic cleavage of DNA to give specific double-stranded fragments with terminal 5'-phosphates.. In terms of biological role, a P subtype restriction enzyme that recognizes the double-stranded sequence 5'-CCWWGG-3' and cleaves after C-1. This chain is Type II restriction enzyme CfrBI, found in Citrobacter freundii.